A 399-amino-acid polypeptide reads, in one-letter code: Probable sugar efflux transporter (399 aa).

12 helical membrane-spanning segments follow: residues Val-15–Leu-35, Val-50–Leu-70, Leu-81–Phe-101, Val-103–Ser-123, Ala-136–Ile-156, Met-168–Leu-188, Pro-209–Tyr-229, Phe-246–Gly-266, Ala-273–Pro-293, Leu-301–Val-321, Val-333–Gly-353, and Ser-364–Phe-384.

It belongs to the major facilitator superfamily. SotB (TC 2.A.1.2) family.

Its subcellular location is the cell inner membrane. Its function is as follows. Involved in the efflux of sugars. The physiological role may be the reduction of the intracellular concentration of toxic sugars or sugar metabolites. This Klebsiella pneumoniae subsp. pneumoniae (strain ATCC 700721 / MGH 78578) protein is Probable sugar efflux transporter.